The following is an 85-amino-acid chain: Arminin 6494 (85 aa).

Positions 1–18 (MKTVFAILFLAFIALTYA) are cleaved as a signal peptide. Residues 19-57 (RSYEDVKEEIKNEVEKEILEDLEEESDELNDKRKEINDA) constitute a propeptide that is removed on maturation. Ala-82 bears the Alanine amide mark.

Belongs to the arminin family. As to expression, expressed in entodermal epithelium along the body column.

Its subcellular location is the secreted. It is found in the target cell membrane. Antimicrobial peptide with a broad-spectrum antimicrobial activity. Keeps its antibacterial activity under a wide range of salt concentrations that mimic physiological conditions of human blood, which is surprising, since Hydra is an obligate freshwater animal with nearly no salt tolerance. Does not affect red blood cells. The sequence is that of Arminin 6494 from Hydra vulgaris (Hydra).